The following is a 341-amino-acid chain: Heme A synthase (341 aa).

Transmembrane regions (helical) follow at residues 11–31 (AVST…IIGG), 101–121 (LIGL…HLSA), 127–147 (LFGL…MVAS), 160–180 (LATH…FSLE), and 194–214 (AGVT…GAFV). His-259 contacts heme. 3 helical membrane passes run 261–278 (WTGY…WQVW), 288–308 (FMVI…AALL), and 315–335 (LSLA…AAAW). His-319 contacts heme.

The protein belongs to the COX15/CtaA family. Type 2 subfamily. In terms of assembly, interacts with CtaB. Heme b is required as a cofactor.

It localises to the cell membrane. The enzyme catalyses Fe(II)-heme o + 2 A + H2O = Fe(II)-heme a + 2 AH2. It participates in porphyrin-containing compound metabolism; heme A biosynthesis; heme A from heme O: step 1/1. Catalyzes the conversion of heme O to heme A by two successive hydroxylations of the methyl group at C8. The first hydroxylation forms heme I, the second hydroxylation results in an unstable dihydroxymethyl group, which spontaneously dehydrates, resulting in the formyl group of heme A. The protein is Heme A synthase of Maricaulis maris (strain MCS10) (Caulobacter maris).